Reading from the N-terminus, the 695-residue chain is Tripartite terminase subunit 1 (695 aa).

The segment at 182–210 (CLECLQEVCLTPNQGTSLQAMLPDTACSH) adopts a C3H1-type zinc-finger fold. ATP is bound at residue 621–628 (YNRTWERE).

This sequence belongs to the herpesviridae TRM1 protein family. Associates with TRM2 and TRM3 to form the tripartite terminase complex. Interacts with portal protein.

It localises to the host nucleus. Its function is as follows. Component of the molecular motor that translocates viral genomic DNA in empty capsid during DNA packaging. Forms a tripartite terminase complex together with TRM2 and TRM3 in the host cytoplasm. Once the complex reaches the host nucleus, it interacts with the capsid portal vertex. This portal forms a ring in which genomic DNA is translocated into the capsid. TRM1 carries an endonuclease activity that plays an important role for the cleavage of concatemeric viral DNA into unit length genomes. This chain is Tripartite terminase subunit 1, found in Homo sapiens (Human).